The sequence spans 435 residues: Gamma-glutamyl phosphate reductase (435 aa).

It belongs to the gamma-glutamyl phosphate reductase family.

It localises to the cytoplasm. It carries out the reaction L-glutamate 5-semialdehyde + phosphate + NADP(+) = L-glutamyl 5-phosphate + NADPH + H(+). It functions in the pathway amino-acid biosynthesis; L-proline biosynthesis; L-glutamate 5-semialdehyde from L-glutamate: step 2/2. Its function is as follows. Catalyzes the NADPH-dependent reduction of L-glutamate 5-phosphate into L-glutamate 5-semialdehyde and phosphate. The product spontaneously undergoes cyclization to form 1-pyrroline-5-carboxylate. This is Gamma-glutamyl phosphate reductase from Nostoc punctiforme (strain ATCC 29133 / PCC 73102).